Consider the following 365-residue polypeptide: Cobalt-precorrin-5B C(1)-methyltransferase (365 aa).

It belongs to the CbiD family.

It catalyses the reaction Co-precorrin-5B + S-adenosyl-L-methionine = Co-precorrin-6A + S-adenosyl-L-homocysteine. It functions in the pathway cofactor biosynthesis; adenosylcobalamin biosynthesis; cob(II)yrinate a,c-diamide from sirohydrochlorin (anaerobic route): step 6/10. In terms of biological role, catalyzes the methylation of C-1 in cobalt-precorrin-5B to form cobalt-precorrin-6A. In Geobacillus sp. (strain WCH70), this protein is Cobalt-precorrin-5B C(1)-methyltransferase.